A 267-amino-acid chain; its full sequence is MADEAPARSGFRGGFGSRGGRGGRGRGRGRWARGRGKEDSKEWVPVTKLGRLVREGKIKSLEEIYLYSLPIKEFEIIDFFLGSSLKDEVLKIMPVQKQTRAGQRTRFKAFVAIGDNNGHIGLGVKCSKEVATAIRGAIILAKLSVVPVRRGYWGNKIGKPHTVPCKVTGKCGSVSVRLIPAPRGTGIVSAPVPKKLLTMAGIEDCYTSARGSTGTLGNFAKATYAAIAKTYAYLTPDLWKEMPLGSTPYQAYSDFLSKPTPRLHADA.

Residues 1–37 (MADEAPARSGFRGGFGSRGGRGGRGRGRGRWARGRGK) form a disordered region. The segment covering 11 to 20 (FRGGFGSRGG) has biased composition (gly residues). Basic residues predominate over residues 21–34 (RGGRGRGRGRWARG). Phosphoserine is present on serine 60. One can recognise an S5 DRBM domain in the interval 85–148 (LKDEVLKIMP…ILAKLSVVPV (64 aa)).

Belongs to the universal ribosomal protein uS5 family.

Functionally, component of the ribosome, a large ribonucleoprotein complex responsible for the synthesis of proteins in the cell. The small ribosomal subunit (SSU) binds messenger RNAs (mRNAs) and translates the encoded message by selecting cognate aminoacyl-transfer RNA (tRNA) molecules. The large subunit (LSU) contains the ribosomal catalytic site termed the peptidyl transferase center (PTC), which catalyzes the formation of peptide bonds, thereby polymerizing the amino acids delivered by tRNAs into a polypeptide chain. The nascent polypeptides leave the ribosome through a tunnel in the LSU and interact with protein factors that function in enzymatic processing, targeting, and the membrane insertion of nascent chains at the exit of the ribosomal tunnel. Plays a role in the assembly and function of the 40S ribosomal subunit. Mutations in this protein affects the control of translational fidelity. Involved in nucleolar processing of pre-18S ribosomal RNA and ribosome assembly. Has a specific developmental role during oogenesis. The chain is Small ribosomal subunit protein uS5 (RpS2) from Drosophila melanogaster (Fruit fly).